The primary structure comprises 419 residues: MATIFYAEPELVIGHNRKILFVNPNDLQIFKEIELPTDLLSSCGLKSSSTSTAEQQSAAAETGGGSVVEGEEPKDTKTIEAGASASAPTVSVQNVSYSPDRQLLAVTTAGQKALVLYKCRPEHAQLVSVRALARASSAIRFAADSSSVLVTDKTGDCYQYDCIETEALPRLLLGHLSIVYDILWTGDQQHIITSDRDDKIRVTNYPATFDIHSYCLGHKEFVSGLALLSDEHICSVSGDKTLRVWNFKAGKELLRTDLPAPAVRLHHRQLPQKSDGDNADNLQRHQLGILFYDHVDAVGLYELEGNGDVWSVTVSQQIRADAGSWNICNFALTEERVYVMGAKDERLTFRCYNSSNGEPITSQLPEGWLTMILDQFPGDAGSCLPEDLSVWFKKRFDNVSDYLERKKRRIEEQQQQHKC.

A compositionally biased stretch (low complexity) spans 51-61 (STAEQQSAAAE). The segment at 51-75 (STAEQQSAAAETGGGSVVEGEEPKD) is disordered. WD repeat units follow at residues 87–127 (APTV…AQLV), 174–213 (GHLS…DIHS), and 217–255 (GHKE…ELLR).

This sequence belongs to the WD repeat TRM82 family. Forms a heterodimer with the catalytic subunit Mettl1. Interacts with mei-P26 and weakly interacts with bgcn; required for the function or formation of the mei-P26-bgcn-bam-sxl complex. Interacts with nanos; may be involved in mei-P26-dependent derepression of the BMP signaling pathway. Interacts with Myc; the interaction may be mediated by mei-P26 and may be involved in the regulation of ribosome biogenesis. In testis, it is present at high level in hub cells, a niche for germline stem cells of testis. Ubiquitously expressed in all testicular cells throughout spermatogenesis. Ubiquitously expressed in all germline and somatic cells of the ovary.

It is found in the nucleus. The protein resides in the cytoplasm. It functions in the pathway tRNA modification; N(7)-methylguanine-tRNA biosynthesis. Required for the Mettl1-dependent formation of N(7)-methylguanine at position 46 (m7G46) in tRNA. In the Mettl1-wuho methyltransferase complex, it is required to stabilize and induce conformational changes of the catalytic subunit. Required for binding of nanos mRNA and repression of translation by the mei-P26-bgcn-bam-sxl complex. May cooperate with mei-P26 and nanos to derepress the BMP signaling pathway. May cooperate with mei-P26 to suppress expression of a subset of microRNAs. May cooperate with mei-P26 to regulate bam expression levels in germline cells during gametogenesis. Required to promote mitosis to meiosis transition during gametogenesis. May regulate germline cell division in part by regulating ribosome biogenesis. This Drosophila willistoni (Fruit fly) protein is tRNA (guanine-N(7)-)-methyltransferase non-catalytic subunit wuho.